We begin with the raw amino-acid sequence, 93 residues long: Pyrimidine/purine nucleoside phosphorylase (93 aa).

It belongs to the nucleoside phosphorylase PpnP family.

The enzyme catalyses a purine D-ribonucleoside + phosphate = a purine nucleobase + alpha-D-ribose 1-phosphate. It carries out the reaction adenosine + phosphate = alpha-D-ribose 1-phosphate + adenine. The catalysed reaction is cytidine + phosphate = cytosine + alpha-D-ribose 1-phosphate. It catalyses the reaction guanosine + phosphate = alpha-D-ribose 1-phosphate + guanine. The enzyme catalyses inosine + phosphate = alpha-D-ribose 1-phosphate + hypoxanthine. It carries out the reaction thymidine + phosphate = 2-deoxy-alpha-D-ribose 1-phosphate + thymine. The catalysed reaction is uridine + phosphate = alpha-D-ribose 1-phosphate + uracil. It catalyses the reaction xanthosine + phosphate = alpha-D-ribose 1-phosphate + xanthine. Catalyzes the phosphorolysis of diverse nucleosides, yielding D-ribose 1-phosphate and the respective free bases. Can use uridine, adenosine, guanosine, cytidine, thymidine, inosine and xanthosine as substrates. Also catalyzes the reverse reactions. This chain is Pyrimidine/purine nucleoside phosphorylase, found in Aliivibrio salmonicida (strain LFI1238) (Vibrio salmonicida (strain LFI1238)).